We begin with the raw amino-acid sequence, 131 residues long: Fimbrial assembly protein, serogroups C1 and C2 (131 aa).

This is Fimbrial assembly protein, serogroups C1 and C2 (fimB) from Dichelobacter nodosus (Bacteroides nodosus).